The sequence spans 517 residues: Bifunctional purine biosynthesis protein PurH (517 aa).

One can recognise an MGS-like domain in the interval 1–145 (MSPLALVSVS…KNHADVAVLV (145 aa)).

The protein belongs to the PurH family.

The enzyme catalyses (6R)-10-formyltetrahydrofolate + 5-amino-1-(5-phospho-beta-D-ribosyl)imidazole-4-carboxamide = 5-formamido-1-(5-phospho-D-ribosyl)imidazole-4-carboxamide + (6S)-5,6,7,8-tetrahydrofolate. It carries out the reaction IMP + H2O = 5-formamido-1-(5-phospho-D-ribosyl)imidazole-4-carboxamide. The protein operates within purine metabolism; IMP biosynthesis via de novo pathway; 5-formamido-1-(5-phospho-D-ribosyl)imidazole-4-carboxamide from 5-amino-1-(5-phospho-D-ribosyl)imidazole-4-carboxamide (10-formyl THF route): step 1/1. Its pathway is purine metabolism; IMP biosynthesis via de novo pathway; IMP from 5-formamido-1-(5-phospho-D-ribosyl)imidazole-4-carboxamide: step 1/1. In Prochlorococcus marinus (strain MIT 9515), this protein is Bifunctional purine biosynthesis protein PurH.